Here is a 470-residue protein sequence, read N- to C-terminus: E3 SUMO-protein ligase EGR2 (470 aa).

The segment covering 126-141 has biased composition (low complexity); it reads PPASTTASSSVTSASP. Disordered stretches follow at residues 126 to 153, 159 to 178, and 184 to 211; these read PPAS…GVCT, PELD…SGCT, and DPSA…YPSP. At Lys-247 the chain carries N6-acetyllysine; by EP300. Positions 275–344 are disordered; that stretch reads GPSAGVTGPG…RPYPCPAEGC (70 aa). The span at 281–291 shows a compositional bias: gly residues; sequence TGPGASGGGEG. 3 C2H2-type zinc fingers span residues 337–361, 367–389, and 395–417; these read YPCP…IRIH, FQCR…IRTH, and FACD…TKIH. Positions 408 to 470 are disordered; the sequence is DERKRHTKIH…ASCTSRTRTP (63 aa). A compositionally biased stretch (basic residues) spans 412–422; sequence RHTKIHLRQKE. Residues 426–439 show a composition bias toward low complexity; sequence SAPSSSASAQSSAS. Over residues 440-450 the composition is skewed to gly residues; sequence GPGGSQAGGSL.

Belongs to the EGR C2H2-type zinc-finger protein family. Interacts with HCFC1. Interacts with WWP2. Interacts with UBC9. Interacts with CITED1. Interacts (via phosphorylated form) with SFN. In terms of processing, ubiquitinated by WWP2 leading to proteasomal degradation. Post-translationally, acetylated at Lys-247. May be deacetylated by HDAC6, HDAC10 or SIRT1.

The protein localises to the nucleus. It participates in protein modification; protein sumoylation. Its function is as follows. Sequence-specific DNA-binding transcription factor. Plays a role in hindbrain segmentation by regulating the expression of a subset of homeobox containing genes and in Schwann cell myelination by regulating the expression of genes involved in the formation and maintenance of myelin. Binds to two EGR2-consensus sites EGR2A (5'-CTGTAGGAG-3') and EGR2B (5'-ATGTAGGTG-3') in the HOXB3 enhancer and promotes HOXB3 transcriptional activation. Binds to specific DNA sites located in the promoter region of HOXA4, HOXB2 and ERBB2. Regulates hindbrain segmentation by controlling the expression of Hox genes, such as HOXA4, HOXB3 and HOXB2, and thereby specifying odd and even rhombomeres. Promotes the expression of HOXB3 in the rhombomere r5 in the hindbrain. Regulates myelination in the peripheral nervous system after birth, possibly by regulating the expression of myelin proteins, such as MPZ, and by promoting the differentiation of Schwann cells. Involved in the development of the jaw openener musculature, probably by playing a role in its innervation through trigeminal motor neurons. May play a role in adipogenesis, possibly by regulating the expression of CEBPB. In terms of biological role, E3 SUMO-protein ligase helping SUMO1 conjugation to its coregulators NAB1 and NAB2, whose sumoylation down-regulates EGR2 transcriptional activity. The polypeptide is E3 SUMO-protein ligase EGR2 (Egr2) (Rattus norvegicus (Rat)).